We begin with the raw amino-acid sequence, 178 residues long: Protein GrpE (178 aa).

The disordered stretch occupies residues 1-26; the sequence is MQDQDKYAEQAASMEEPASADAPAIV.

This sequence belongs to the GrpE family. As to quaternary structure, homodimer.

The protein resides in the cytoplasm. Functionally, participates actively in the response to hyperosmotic and heat shock by preventing the aggregation of stress-denatured proteins, in association with DnaK and GrpE. It is the nucleotide exchange factor for DnaK and may function as a thermosensor. Unfolded proteins bind initially to DnaJ; upon interaction with the DnaJ-bound protein, DnaK hydrolyzes its bound ATP, resulting in the formation of a stable complex. GrpE releases ADP from DnaK; ATP binding to DnaK triggers the release of the substrate protein, thus completing the reaction cycle. Several rounds of ATP-dependent interactions between DnaJ, DnaK and GrpE are required for fully efficient folding. This Herminiimonas arsenicoxydans protein is Protein GrpE.